A 476-amino-acid polypeptide reads, in one-letter code: Aspartyl/glutamyl-tRNA(Asn/Gln) amidotransferase subunit B (476 aa).

This sequence belongs to the GatB/GatE family. GatB subfamily. In terms of assembly, heterotrimer of A, B and C subunits.

The catalysed reaction is L-glutamyl-tRNA(Gln) + L-glutamine + ATP + H2O = L-glutaminyl-tRNA(Gln) + L-glutamate + ADP + phosphate + H(+). The enzyme catalyses L-aspartyl-tRNA(Asn) + L-glutamine + ATP + H2O = L-asparaginyl-tRNA(Asn) + L-glutamate + ADP + phosphate + 2 H(+). Its function is as follows. Allows the formation of correctly charged Asn-tRNA(Asn) or Gln-tRNA(Gln) through the transamidation of misacylated Asp-tRNA(Asn) or Glu-tRNA(Gln) in organisms which lack either or both of asparaginyl-tRNA or glutaminyl-tRNA synthetases. The reaction takes place in the presence of glutamine and ATP through an activated phospho-Asp-tRNA(Asn) or phospho-Glu-tRNA(Gln). The sequence is that of Aspartyl/glutamyl-tRNA(Asn/Gln) amidotransferase subunit B from Oleidesulfovibrio alaskensis (strain ATCC BAA-1058 / DSM 17464 / G20) (Desulfovibrio alaskensis).